A 387-amino-acid polypeptide reads, in one-letter code: Putative gustatory receptor 22d (387 aa).

The Cytoplasmic segment spans residues 1–43; it reads MFRPRCGLRQKFVYVILKSILYSSWLLGIFPFKYEPKKRRLRR. The helical transmembrane segment at 44–64 threads the bilayer; sequence SMWLILFGVVISSSLLILMVK. Over 65 to 82 the chain is Extracellular; sequence QSAEDREHGIMLDVFQRN. The helical transmembrane segment at 83–103 threads the bilayer; the sequence is ALLYQISSLMGVVGVVSICTV. Residues 104–142 lie on the Cytoplasmic side of the membrane; the sequence is HLRTLWRSKHLEEIYNGLMLLEAKYFCSNAVECPAFDGY. A helical transmembrane segment spans residues 143-163; it reads VIQKGVVIVVGLLAPWMVHFG. Topologically, residues 164–184 are extracellular; it reads MPDSKLPVLNVLVVSMVKLGT. A helical membrane pass occupies residues 185–205; sequence LLLALHYHLGVVIIYRFVWLI. Residues 206–252 lie on the Cytoplasmic side of the membrane; sequence NRELLSLVCSLRGNHKGSSSRVRFLLKLYNKLVNLYSKLADCYDCQT. Residues 253 to 273 traverse the membrane as a helical segment; the sequence is VLMMAIFLAANIIVCFYMIVY. The Extracellular portion of the chain corresponds to 274-281; it reads RISLSKMS. The chain crosses the membrane as a helical span at residues 282–302; that stretch reads FFVMLIMFPLAIANNFMDFWL. The Cytoplasmic segment spans residues 303 to 363; sequence SMKVCDLLQK…HCGLFHVNRE (61 aa). A helical transmembrane segment spans residues 364-384; sequence MGFKMFVASVLYLLYLVQFDY. The Extracellular segment spans residues 385–387; it reads MNL.

The protein belongs to the insect chemoreceptor superfamily. Gustatory receptor (GR) family. Gr22e subfamily. Expressed in neurons of the dorsal pharyngeal sense organs of larvae.

It localises to the cell membrane. Functionally, probable gustatory receptor which mediates acceptance or avoidance behavior, depending on its substrates. The chain is Putative gustatory receptor 22d from Drosophila melanogaster (Fruit fly).